Reading from the N-terminus, the 297-residue chain is Non-homologous end-joining factor 1 (297 aa).

A globular head region spans residues 1–131 (MDARLLQLPW…ATVSTVCRHL (131 aa)). The tract at residues 220-286 (PKAPTHPKEE…LTHRPPAGAS (67 aa)) is C-terminal tail. The tract at residues 222–297 (APTHPKEEDT…PKKKAKGLFM (76 aa)) is disordered. Over residues 232 to 255 (GNSASHRPMAESSSISFEKTVPTQ) the composition is skewed to polar residues. Over residues 263–286 (VSEPSQVPQSSVSCLTHRPPAGAS) the composition is skewed to low complexity. The XLM signature appears at 287 to 297 (KPKKKAKGLFM). Over residues 287–297 (KPKKKAKGLFM) the composition is skewed to basic residues.

It belongs to the XRCC4-XLF family. XLF subfamily. In terms of assembly, homodimer. Interacts with xrcc4; the interaction is direct and is mediated via a head-to-head interaction between N-terminal head regions. Component of the core long-range non-homologous end joining (NHEJ) complex (also named DNA-PK complex) composed of prkdc/DNA-PKcs, lig4, xrcc4, xrcc6/Ku70, xrcc5/Ku80 and nhej1/xlf.

It localises to the nucleus. DNA repair protein involved in DNA non-homologous end joining (NHEJ); required for double-strand break (DSB) repair and V(D)J recombination. It is also involved in telomere maintenance. Plays a key role in NHEJ by promoting the ligation of various mismatched and non-cohesive ends. In some studies, has been shown to associate with xrcc4 to form alternating helical filaments that bridge DNA and act like a bandage, holding together the broken DNA until it is repaired. Alternatively, it has also been shown that rather than forming filaments, a single nhej1 dimer interacts through both head domains with xrcc4 to promote the close alignment of DNA ends. The xrcc4-nhej1/xlf subcomplex binds to the DNA fragments of a DSB in a highly diffusive manner and robustly bridges two independent DNA molecules, holding the broken DNA fragments in close proximity to one other. The mobility of the bridges ensures that the ends remain accessible for further processing by other repair factors. The protein is Non-homologous end-joining factor 1 of Xenopus laevis (African clawed frog).